Consider the following 199-residue polypeptide: MKKLVLASGNAGKLGELRAMLAGVALQITAQGEFGVQDVPETGLTFIENALIKARHACLMTGFPALADDSGLIVDALGGAPGLYSARYAGTPTDAAANNAKLLEMLRDVPAGRRCARFYAVIVLLRHAEDPQPLIADGCWEGEIAFEPCGSGGFGYNPIFFDPLYGMTAAQMGAELKNKISHRARALERLRDCLHTFMA.

Residue 8-13 participates in substrate binding; that stretch reads SGNAGK. Asp-69 functions as the Proton acceptor in the catalytic mechanism. Asp-69 is a binding site for Mg(2+). Substrate-binding positions include Ser-70, 154–157, Lys-177, and 182–183; these read FGYN and HR.

The protein belongs to the HAM1 NTPase family. In terms of assembly, homodimer. The cofactor is Mg(2+).

The catalysed reaction is XTP + H2O = XMP + diphosphate + H(+). The enzyme catalyses dITP + H2O = dIMP + diphosphate + H(+). It carries out the reaction ITP + H2O = IMP + diphosphate + H(+). Functionally, pyrophosphatase that catalyzes the hydrolysis of nucleoside triphosphates to their monophosphate derivatives, with a high preference for the non-canonical purine nucleotides XTP (xanthosine triphosphate), dITP (deoxyinosine triphosphate) and ITP. Seems to function as a house-cleaning enzyme that removes non-canonical purine nucleotides from the nucleotide pool, thus preventing their incorporation into DNA/RNA and avoiding chromosomal lesions. This chain is dITP/XTP pyrophosphatase, found in Xylella fastidiosa (strain Temecula1 / ATCC 700964).